A 296-amino-acid chain; its full sequence is Ribosomal RNA small subunit methyltransferase H (296 aa).

Residues 30-32, Asp-49, Phe-76, Asp-97, and Gln-104 contribute to the S-adenosyl-L-methionine site; that span reads GGH.

It belongs to the methyltransferase superfamily. RsmH family.

The protein resides in the cytoplasm. The catalysed reaction is cytidine(1402) in 16S rRNA + S-adenosyl-L-methionine = N(4)-methylcytidine(1402) in 16S rRNA + S-adenosyl-L-homocysteine + H(+). Its function is as follows. Specifically methylates the N4 position of cytidine in position 1402 (C1402) of 16S rRNA. The protein is Ribosomal RNA small subunit methyltransferase H of Mesomycoplasma hyopneumoniae (strain 232) (Mycoplasma hyopneumoniae).